An 84-amino-acid chain; its full sequence is U4-theraphotoxin-Hhn1b (84 aa).

The signal sequence occupies residues Met-1–Ala-22. The propeptide occupies Glu-23–Arg-47. 3 disulfide bridges follow: Cys-51-Cys-65, Cys-55-Cys-76, and Cys-70-Cys-81.

The protein belongs to the neurotoxin 12 (Hwtx-2) family. 02 (Hwtx-2) subfamily. Expressed by the venom gland.

Its subcellular location is the secreted. Its function is as follows. Postsynaptic neurotoxin. This chain is U4-theraphotoxin-Hhn1b, found in Cyriopagopus hainanus (Chinese bird spider).